We begin with the raw amino-acid sequence, 341 residues long: Dual oxidase maturation factor 1 (341 aa).

The Extracellular portion of the chain corresponds to 1–24 (MAALGHTLPFYTGTKPTFPMDTTL). A helical transmembrane segment spans residues 25–45 (AVIITIFLTALVTFIIILPGI). Topologically, residues 46–51 (RGKTRL) are cytoplasmic. A helical transmembrane segment spans residues 52–72 (FWLLRVVTSLFIGAVILAVNF). Over 73–183 (SSEWSVGHVN…RLAGHYASAM (111 aa)) the chain is Extracellular. N84, N109, and N121 each carry an N-linked (GlcNAc...) asparagine glycan. The helical transmembrane segment at 184–204 (LWVAFLCWLLANVMLSMPVLV) threads the bilayer. Position 205 (Y205) is a topological domain, cytoplasmic. The helical transmembrane segment at 206-226 (GGHMLLATGLFQLLALFFFSM) threads the bilayer. Topologically, residues 227-249 (TTSLISPCPLRLGTAVLHTHHGP) are extracellular. A helical membrane pass occupies residues 250–270 (AFWITLATGLLCILLGLVMAV). Residues 271 to 341 (AHRMQPHRLK…EHPKESDCSL (71 aa)) lie on the Cytoplasmic side of the membrane.

This sequence belongs to the DUOXA family. In terms of assembly, may interact with NUMB.

It localises to the membrane. In terms of biological role, may be required for the maturation and the transport from the endoplasmic reticulum to the plasma membrane of functional DUOX1. The chain is Dual oxidase maturation factor 1 (Duoxa1) from Mus musculus (Mouse).